A 283-amino-acid polypeptide reads, in one-letter code: D-alanine aminotransferase (283 aa).

Tyr-31 is a binding site for substrate. Arg-50 provides a ligand contact to pyridoxal 5'-phosphate. The substrate site is built by Arg-98 and His-100. Catalysis depends on Lys-144, which acts as the Proton acceptor. Lys-144 is modified (N6-(pyridoxal phosphate)lysine). Glu-176 provides a ligand contact to pyridoxal 5'-phosphate.

It belongs to the class-IV pyridoxal-phosphate-dependent aminotransferase family. In terms of assembly, homodimer. Pyridoxal 5'-phosphate serves as cofactor.

It carries out the reaction D-alanine + 2-oxoglutarate = D-glutamate + pyruvate. Functionally, acts on the D-isomers of alanine, leucine, aspartate, glutamate, aminobutyrate, norvaline and asparagine. The enzyme transfers an amino group from a substrate D-amino acid to the pyridoxal phosphate cofactor to form pyridoxamine and an alpha-keto acid in the first half-reaction. The second half-reaction is the reverse of the first, transferring the amino group from the pyridoxamine to a second alpha-keto acid to form the product D-amino acid via a ping-pong mechanism. This is an important process in the formation of D-alanine and D-glutamate, which are essential bacterial cell wall components. In Bacillus licheniformis, this protein is D-alanine aminotransferase (dat).